The primary structure comprises 342 residues: Methyltransferase ungE' (342 aa).

It belongs to the methyltransferase superfamily.

Its pathway is secondary metabolite biosynthesis. Its function is as follows. Methyltransferase; part of the gene cluster that mediates the biosynthesis of the unguisins, gamma-aminobutyric acid (GABA)-containing fungal cyclic heptapeptides with the amino acid sequence cyclo-(D-Ala1-D-Val2-L-Leu3-beta-MePhe4-D-Ala5-D-Trp6-GABA7) for unguisin H and cyclo-(D-Ala1-D-Ala2-L-Leu3-beta-MePhe4-D-Ala5-D-Trp6-GABA7) for unguisin I. Within the pathway, the methyltransferase ungE' is probably involved in the synthesis of the (2R,3R)-beta-methylphenylalanine residue incorporated by the module 4 of the nonribosomal peptide synthetase (NRPS) ungA'. The alanine racemase ungC' catalyzes the interconversion of L-alanine and D-alanine, providing the D-alanine which is accepted by the first adenylation domain of ungA'. UngA' is the main enzyme within the cluster which condenses the 7 residues using its respective 7 modules. The terminal condensation domain (Ct) is involved in cyclization with D-alanine and thereby releasing of unguisins H and I. Finally, the hydrolase ungD' catalyzes the hydrolysis between the D-tryptophan and GABA residues of unguisins H and I to produce the corresponding linear peptides. The protein is Methyltransferase ungE' of Aspergillus campestris (strain IBT 28561).